A 139-amino-acid chain; its full sequence is Growth factor (139 aa).

The first 19 residues, 1–19 (MSMKYLMLLFATMIIRSFA), serve as a signal peptide directing secretion. A glycan (N-linked (GlcNAc...) asparagine; by host) is linked at Asn-34. One can recognise an EGF-like domain in the interval 41 to 81 (AIRLCGPEGDGYCLHGDCIHARDINGMYCRCSHGYTGIRCQ). 3 cysteine pairs are disulfide-bonded: Cys-45/Cys-58, Cys-53/Cys-69, and Cys-71/Cys-80. Asn-95 carries N-linked (GlcNAc...) asparagine; by host glycosylation.

It belongs to the orthopoxvirus OPG019 family.

It is found in the secreted. Stimulates cellular proliferation (hyperplasia)and mobility around infected cells to promote rapid and efficient spread of infection. The chain is Growth factor (OPG019) from Camelus.